The chain runs to 1212 residues: MVLLLILSVLLLKEDVRGSAQSSERRVVAHMPGDIIIGALFSVHHQPTVDKVHERKCGAVREQYGIQRVEAMLHTLERINSDPTLLPNITLGCEIRDSCWHSAVALEQSIEFIRDSLISSEEEEGLVRCVDGSSSSFRSKKPIVGVIGPGSSSVAIQVQNLLQLFNIPQIAYSATSMDLSDKTLFKYFMRVVPSDAQQARAMVDIVKRYNWTYVSAVHTEGNYGESGMEAFKDMSAKEGICIAHSYKIYSNAGEQSFDKLLKKLTSHLPKARVVACFCEGMTVRGLLMAMRRLGLAGEFLLLGSDGWADRYDVTDGYQREAVGGITIKLQSPDVKWFDDYYLKLRPETNHRNPWFQEFWQHRFQCRLEGFPQENSKYNKTCNSSLTLKTHHVQDSKMGFVINAIYSMAYGLHNMQMSLCPGYAGLCDAMKPIDGRKLLESLMKTNFTGVSGDTILFDENGDSPGRYEIMNFKEMGKDYFDYINVGSWDNGELKMDDDEVWSKKSNIIRSVCSEPCEKGQIKVIRKGEVSCCWTCTPCKENEYVFDEYTCKACQLGSWPTDDLTGCDLIPVQYLRWGDPEPIAAVVFACLGLLATLFVTVVFIIYRDTPVVKSSSRELCYIILAGICLGYLCTFCLIAKPKQIYCYLQRIGIGLSPAMSYSALVTKTNRIARILAGSKKKICTKKPRFMSACAQLVIAFILICIQLGIIVALFIMEPPDIMHDYPSIREVYLICNTTNLGVVTPLGYNGLLILSCTFYAFKTRNVPANFNEAKYIAFTMYTTCIIWLAFVPIYFGSNYKIITMCFSVSLSATVALGCMFVPKVYIILAKPERNVRSAFTTSTVVRMHVGDGKSSSAASRSSSLVNLWKRRGSSGETLRYKDRRLAQHKSEIECFTPKGSMGNGGRATMSSSNGKSVTWAQNEKSSRGQHLWQRLSIHINKKENPNQTAVIKPFPKSTESRGLGAGAGAGGSAGGVGATGGAGCAGAGPGGPESPDAGPKALYDVAEAEEHFPAPARPRSPSPISTLSHRAGSASRTDDDVPSLHSEPVARSSSSQGSLMEQISSVVTRFTANISELNSMMLSTAAPSPGVGAPLCSSYLIPKEIQLPTTMTTFAEIQPLPAIEVTGGAQPAAGAQAAGDAARESPAAGPEAAAAKPDLEELVALTPPSPFRDSVDSGSTTPNSPVSESALCIPSSPKYDTLIIRDYTQSSSSL.

The N-terminal stretch at 1–20 is a signal peptide; that stretch reads MVLLLILSVLLLKEDVRGSA. The Extracellular portion of the chain corresponds to 22–580; the sequence is SSERRVVAHM…QYLRWGDPEP (559 aa). A disulfide bond links Cys57 and Cys99. Tyr64 serves as a coordination point for L-glutamate. An N-linked (GlcNAc...) asparagine glycan is attached at Asn88. L-glutamate-binding positions include Ser152 and 173 to 175; that span reads SAT. Asn210 carries N-linked (GlcNAc...) asparagine glycosylation. An L-glutamate-binding site is contributed by Tyr223. Intrachain disulfides connect Cys241/Cys530, Cys276/Cys278, Cys365/Cys381, Cys419/Cys426, Cys511/Cys531, Cys515/Cys534, Cys537/Cys549, and Cys552/Cys565. Asp305 is a binding site for L-glutamate. N-linked (GlcNAc...) asparagine glycans are attached at residues Asn378 and Asn382. L-glutamate is bound at residue Lys396. Asn445 carries an N-linked (GlcNAc...) asparagine glycan. A helical transmembrane segment spans residues 581 to 603; it reads IAAVVFACLGLLATLFVTVVFII. At 604 to 613 the chain is on the cytoplasmic side; it reads YRDTPVVKSS. A helical transmembrane segment spans residues 614–636; the sequence is SRELCYIILAGICLGYLCTFCLI. Topologically, residues 637–644 are extracellular; that stretch reads AKPKQIYC. The cysteines at positions 644 and 733 are disulfide-linked. Residues 645-667 traverse the membrane as a helical segment; sequence YLQRIGIGLSPAMSYSALVTKTN. At 668 to 693 the chain is on the cytoplasmic side; that stretch reads RIARILAGSKKKICTKKPRFMSACAQ. The helical transmembrane segment at 694–714 threads the bilayer; it reads LVIAFILICIQLGIIVALFIM. The Extracellular segment spans residues 715-737; it reads EPPDIMHDYPSIREVYLICNTTN. Residue Asn734 is glycosylated (N-linked (GlcNAc...) asparagine). Residues 738 to 759 form a helical membrane-spanning segment; that stretch reads LGVVTPLGYNGLLILSCTFYAF. Residues 760–772 are Cytoplasmic-facing; that stretch reads KTRNVPANFNEAK. The chain crosses the membrane as a helical span at residues 773–795; that stretch reads YIAFTMYTTCIIWLAFVPIYFGS. The Extracellular portion of the chain corresponds to 796–798; the sequence is NYK. A helical membrane pass occupies residues 799–820; sequence IITMCFSVSLSATVALGCMFVP. The Cytoplasmic portion of the chain corresponds to 821–1212; sequence KVYIILAKPE…RDYTQSSSSL (392 aa). At Ser861 the chain carries Phosphoserine. 2 positions are modified to omega-N-methylarginine: Arg869 and Arg925. 3 disordered regions span residues 937–971, 1010–1056, and 1132–1191; these read INKK…GGSA, FPAP…SQGS, and GAQA…ALCI. Residues 961-971 show a composition bias toward gly residues; sequence LGAGAGAGGSA. Residues Ser1018 and Ser1020 each carry the phosphoserine modification. Low complexity predominate over residues 1132 to 1153; sequence GAQAAGDAARESPAAGPEAAAA. The segment covering 1174–1185 has biased composition (polar residues); that stretch reads DSGSTTPNSPVS.

Belongs to the G-protein coupled receptor 3 family. As to quaternary structure, the PPXXF motif binds HOMER1, HOMER2 and HOMER3. Interacts with SIAH1, RYR1, RYR2, ITPR1, SHANK1, SHANK3 and TAMALIN. Interacts with NCDN. Isoform 2 interacts with NECAB2. Interacts with CAMK2A.

It localises to the cell membrane. Functionally, G-protein coupled receptor for glutamate. Ligand binding causes a conformation change that triggers signaling via guanine nucleotide-binding proteins (G proteins) and modulates the activity of down-stream effectors. Signaling activates a phosphatidylinositol-calcium second messenger system and generates a calcium-activated chloride current. Plays an important role in the regulation of synaptic plasticity and the modulation of the neural network activity. The chain is Metabotropic glutamate receptor 5 (GRM5) from Homo sapiens (Human).